A 348-amino-acid polypeptide reads, in one-letter code: Phenylalanine--tRNA ligase alpha subunit (348 aa).

Residue Glu-259 coordinates Mg(2+).

It belongs to the class-II aminoacyl-tRNA synthetase family. Phe-tRNA synthetase alpha subunit type 1 subfamily. In terms of assembly, tetramer of two alpha and two beta subunits. Mg(2+) serves as cofactor.

It is found in the cytoplasm. The enzyme catalyses tRNA(Phe) + L-phenylalanine + ATP = L-phenylalanyl-tRNA(Phe) + AMP + diphosphate + H(+). The protein is Phenylalanine--tRNA ligase alpha subunit of Lacticaseibacillus paracasei (strain ATCC 334 / BCRC 17002 / CCUG 31169 / CIP 107868 / KCTC 3260 / NRRL B-441) (Lactobacillus paracasei).